Here is a 336-residue protein sequence, read N- to C-terminus: UDP-glucose 4-epimerase (336 aa).

NAD(+) contacts are provided by residues 11-12 (YI), 31-36 (DNLINS), 58-59 (DI), 80-84 (FAGLK), Asn99, Ser124, Tyr149, Lys153, and Phe178. Ser124 and Tyr149 together coordinate substrate. Catalysis depends on Tyr149, which acts as the Proton acceptor. Substrate contacts are provided by residues Asn179, 199–200 (NL), 216–218 (LVY), Arg231, and 290–293 (RPGD).

Belongs to the NAD(P)-dependent epimerase/dehydratase family. Homodimer. Requires NAD(+) as cofactor.

The catalysed reaction is UDP-alpha-D-glucose = UDP-alpha-D-galactose. It functions in the pathway carbohydrate metabolism; galactose metabolism. Functionally, involved in the metabolism of galactose. Catalyzes the conversion of UDP-galactose (UDP-Gal) to UDP-glucose (UDP-Glc) through a mechanism involving the transient reduction of NAD. The polypeptide is UDP-glucose 4-epimerase (galE) (Yersinia enterocolitica).